The chain runs to 449 residues: Phosphoglucosamine mutase (449 aa).

Catalysis depends on Ser101, which acts as the Phosphoserine intermediate. Residues Ser101, Asp242, Asp244, and Asp246 each coordinate Mg(2+). Ser101 carries the post-translational modification Phosphoserine.

The protein belongs to the phosphohexose mutase family. Mg(2+) serves as cofactor. Post-translationally, activated by phosphorylation.

The catalysed reaction is alpha-D-glucosamine 1-phosphate = D-glucosamine 6-phosphate. Catalyzes the conversion of glucosamine-6-phosphate to glucosamine-1-phosphate. The sequence is that of Phosphoglucosamine mutase from Hyphomonas neptunium (strain ATCC 15444).